The primary structure comprises 608 residues: DNA mismatch repair protein MutL (608 aa).

The interval 363–397 (ASLAMARKPDPPRFHETARPQPDPRHTPGTESVSV) is disordered. A compositionally biased stretch (basic and acidic residues) spans 369 to 390 (RKPDPPRFHETARPQPDPRHTP).

The protein belongs to the DNA mismatch repair MutL/HexB family.

This protein is involved in the repair of mismatches in DNA. It is required for dam-dependent methyl-directed DNA mismatch repair. May act as a 'molecular matchmaker', a protein that promotes the formation of a stable complex between two or more DNA-binding proteins in an ATP-dependent manner without itself being part of a final effector complex. This is DNA mismatch repair protein MutL from Pelobacter propionicus (strain DSM 2379 / NBRC 103807 / OttBd1).